Consider the following 618-residue polypeptide: 1-deoxy-D-xylulose-5-phosphate synthase (618 aa).

Thiamine diphosphate contacts are provided by residues His72 and 113–115; that span reads GHA. Asp144 is a binding site for Mg(2+). Residues 145–146, Asn173, His284, and Glu359 each bind thiamine diphosphate; that span reads GA. Asn173 contacts Mg(2+).

It belongs to the transketolase family. DXPS subfamily. As to quaternary structure, homodimer. It depends on Mg(2+) as a cofactor. Requires thiamine diphosphate as cofactor.

It catalyses the reaction D-glyceraldehyde 3-phosphate + pyruvate + H(+) = 1-deoxy-D-xylulose 5-phosphate + CO2. Its pathway is metabolic intermediate biosynthesis; 1-deoxy-D-xylulose 5-phosphate biosynthesis; 1-deoxy-D-xylulose 5-phosphate from D-glyceraldehyde 3-phosphate and pyruvate: step 1/1. In terms of biological role, catalyzes the acyloin condensation reaction between C atoms 2 and 3 of pyruvate and glyceraldehyde 3-phosphate to yield 1-deoxy-D-xylulose-5-phosphate (DXP). This is 1-deoxy-D-xylulose-5-phosphate synthase from Dictyoglomus turgidum (strain DSM 6724 / Z-1310).